The chain runs to 102 residues: Hypersensitivity to hygromycin-B protein 1 (102 aa).

The N-terminal stretch at 1 to 17 (MSLSFLLFSPFLPPCFS) is a signal peptide. The helical transmembrane segment at 18 to 38 (SISICLSVLSTVSFFFAFTIP) threads the bilayer. At 39-69 (HYVLRCGSVDEWHIHSSAEDFRTQRCVCAVK) the chain is on the cytoplasmic side. The chain crosses the membrane as a helical span at residues 70–90 (LSASLLGCLLACASWSLLLEV). At 91–102 (SRIKWHVGTAYS) the chain is on the extracellular side.

The protein localises to the membrane. Its function is as follows. Involved in vacuolar trafficking. The chain is Hypersensitivity to hygromycin-B protein 1 from Saccharomyces cerevisiae (strain ATCC 204508 / S288c) (Baker's yeast).